Consider the following 370-residue polypeptide: Phospho-2-dehydro-3-deoxyheptonate aldolase, phenylalanine-inhibited (370 aa).

It belongs to the class-I DAHP synthase family.

It catalyses the reaction D-erythrose 4-phosphate + phosphoenolpyruvate + H2O = 7-phospho-2-dehydro-3-deoxy-D-arabino-heptonate + phosphate. The protein operates within metabolic intermediate biosynthesis; chorismate biosynthesis; chorismate from D-erythrose 4-phosphate and phosphoenolpyruvate: step 1/7. With respect to regulation, inhibited by phenyalanine. Stereospecific condensation of phosphoenolpyruvate (PEP) and D-erythrose-4-phosphate (E4P) giving rise to 3-deoxy-D-arabino-heptulosonate-7-phosphate (DAHP). This is Phospho-2-dehydro-3-deoxyheptonate aldolase, phenylalanine-inhibited (ARO3) from Saccharomyces cerevisiae (strain ATCC 204508 / S288c) (Baker's yeast).